The chain runs to 85 residues: UPF0297 protein LGAS_0422 (85 aa).

This sequence belongs to the UPF0297 family.

The protein is UPF0297 protein LGAS_0422 of Lactobacillus gasseri (strain ATCC 33323 / DSM 20243 / BCRC 14619 / CIP 102991 / JCM 1131 / KCTC 3163 / NCIMB 11718 / NCTC 13722 / AM63).